A 254-amino-acid chain; its full sequence is NAD-dependent protein deacylase (254 aa).

One can recognise a Deacetylase sirtuin-type domain in the interval 1–250 (MERLEEARKR…LPPSPEDQAE (250 aa)). 22-41 (GAGISKPSGIPTFRDAEGLW) lines the NAD(+) pocket. Y66 and R69 together coordinate substrate. NAD(+) is bound at residue 104-107 (QNVD). The active-site Proton acceptor is H122. Residues C130, C133, C149, and C152 each contribute to the Zn(2+) site. NAD(+) contacts are provided by residues 189 to 191 (GTS), 215 to 217 (NPE), and A233.

The protein belongs to the sirtuin family. Class III subfamily. Zn(2+) is required as a cofactor.

It localises to the cytoplasm. It catalyses the reaction N(6)-acetyl-L-lysyl-[protein] + NAD(+) + H2O = 2''-O-acetyl-ADP-D-ribose + nicotinamide + L-lysyl-[protein]. The enzyme catalyses N(6)-succinyl-L-lysyl-[protein] + NAD(+) + H2O = 2''-O-succinyl-ADP-D-ribose + nicotinamide + L-lysyl-[protein]. NAD-dependent lysine deacetylase and desuccinylase that specifically removes acetyl and succinyl groups on target proteins. Modulates the activities of several proteins which are inactive in their acylated form. The protein is NAD-dependent protein deacylase of Thermus thermophilus (strain ATCC 27634 / DSM 579 / HB8).